Here is a 143-residue protein sequence, read N- to C-terminus: Large ribosomal subunit protein uL15 (143 aa).

The disordered stretch occupies residues 1–57 (MQLNNLKPAAGSKHAKRRVGRGIGSGLGKTAGRGHKGQKSRSGGFHKVGFEGGQMPL). Residues 21 to 31 (RGIGSGLGKTA) show a composition bias toward gly residues.

Belongs to the universal ribosomal protein uL15 family. Part of the 50S ribosomal subunit.

Functionally, binds to the 23S rRNA. This chain is Large ribosomal subunit protein uL15, found in Ralstonia nicotianae (strain ATCC BAA-1114 / GMI1000) (Ralstonia solanacearum).